The sequence spans 363 residues: Probable cinnamyl alcohol dehydrogenase 6 (363 aa).

Position 51 (cysteine 51) interacts with Zn(2+). Serine 53 is an NADP(+) binding site. Residues histidine 73, glutamate 74, cysteine 104, cysteine 107, cysteine 110, cysteine 118, and cysteine 167 each contribute to the Zn(2+) site. Residues serine 171, 192–197 (GLGGLG), 215–220 (SSTTGK), threonine 255, glycine 279, and 302–304 (SGI) each bind NADP(+).

This sequence belongs to the zinc-containing alcohol dehydrogenase family. Homodimer. Zn(2+) serves as cofactor. In terms of tissue distribution, expressed in the primary and lateral roots, and root caps. Expressed in the hypocotyl, cotyledon veins and hydathodes. In stems, expressed in the vascular cambium, interfascicular cambium and developing xylem. Expressed in the style, anthers, stamen filaments, vascular tissues of sepals, stigmatic regions in flowers, and abscission and style regions of siliques.

The catalysed reaction is (E)-cinnamyl alcohol + NADP(+) = (E)-cinnamaldehyde + NADPH + H(+). It catalyses the reaction (E)-coniferol + NADP(+) = (E)-coniferaldehyde + NADPH + H(+). It carries out the reaction (E)-sinapyl alcohol + NADP(+) = (E)-sinapaldehyde + NADPH + H(+). The enzyme catalyses (E)-4-coumaroyl alcohol + NADP(+) = (E)-4-coumaraldehyde + NADPH + H(+). The catalysed reaction is (E)-caffeyl alcohol + NADP(+) = (E)-caffeyl aldehyde + NADPH + H(+). It functions in the pathway aromatic compound metabolism; phenylpropanoid biosynthesis. Functionally, involved in lignin biosynthesis. Catalyzes the final step specific for the production of lignin monomers. Catalyzes the NADPH-dependent reduction of coniferaldehyde, 5-hydroxyconiferaldehyde, sinapaldehyde, 4-coumaraldehyde and caffeyl aldehyde to their respective alcohols. In Arabidopsis thaliana (Mouse-ear cress), this protein is Probable cinnamyl alcohol dehydrogenase 6 (CAD6).